A 1088-amino-acid chain; its full sequence is RNA-directed RNA polymerase (1088 aa).

A RdRp catalytic domain is found at 501-687; sequence LSYGDVTRFL…AKRYIAGGKI (187 aa).

This sequence belongs to the reoviridae RNA-directed RNA polymerase family. Interacts with VP3 (Potential). Interacts with VP2; this interaction activates VP1. Interacts with NSP5; this interaction is probably necessary for the formation of functional virus factories. Interacts with NSP2; this interaction is weak. It depends on Mg(2+) as a cofactor.

It localises to the virion. It carries out the reaction RNA(n) + a ribonucleoside 5'-triphosphate = RNA(n+1) + diphosphate. RNA-directed RNA polymerase that is involved in both transcription and genome replication. Together with VP3 capping enzyme, forms an enzyme complex positioned near the channels situated at each of the five-fold vertices of the core. Following infection, the outermost layer of the virus is lost, leaving a double-layered particle (DLP) made up of the core and VP6 shell. VP1 then catalyzes the transcription of fully conservative plus-strand genomic RNAs that are extruded through the DLP's channels into the cytoplasm where they function as mRNAs for translation of viral proteins. One copy of each of the viral (+)RNAs is also recruited during core assembly, together with newly synthesized polymerase complexes and VP2. The polymerase of these novo-formed particles catalyzes the synthesis of complementary minus-strands leading to dsRNA formation. To do so, the polymerase specifically recognizes and binds 4 bases 5'-UGUG-3' in the conserved 3'-sequence of plus-strand RNA templates. VP2 presumably activates the autoinhibited VP1-RNA complex to coordinate packaging and genome replication. Once dsRNA synthesis is complete, the polymerase switches to the transcriptional mode, thus providing secondary transcription. This chain is RNA-directed RNA polymerase, found in Rotavirus A (strain RVA/Pig/United States/Gottfried/1983/G4P2B[6]) (RV-A).